The primary structure comprises 706 residues: Ribosomal RNA large subunit methyltransferase K/L (706 aa).

Residues 43–154 enclose the THUMP domain; that stretch reads LLYQSLLWSR…RDMASVALDL (112 aa).

It belongs to the methyltransferase superfamily. RlmKL family.

It localises to the cytoplasm. It carries out the reaction guanosine(2445) in 23S rRNA + S-adenosyl-L-methionine = N(2)-methylguanosine(2445) in 23S rRNA + S-adenosyl-L-homocysteine + H(+). The enzyme catalyses guanosine(2069) in 23S rRNA + S-adenosyl-L-methionine = N(2)-methylguanosine(2069) in 23S rRNA + S-adenosyl-L-homocysteine + H(+). Its function is as follows. Specifically methylates the guanine in position 2445 (m2G2445) and the guanine in position 2069 (m7G2069) of 23S rRNA. The chain is Ribosomal RNA large subunit methyltransferase K/L from Serratia proteamaculans (strain 568).